We begin with the raw amino-acid sequence, 120 residues long: ATP-dependent Clp protease adapter protein ClpS (120 aa).

A disordered region spans residues 1-25; sequence MHARSEIRLTFNQDRPQSNEDDGSG.

The protein belongs to the ClpS family. As to quaternary structure, binds to the N-terminal domain of the chaperone ClpA.

In terms of biological role, involved in the modulation of the specificity of the ClpAP-mediated ATP-dependent protein degradation. The protein is ATP-dependent Clp protease adapter protein ClpS of Pseudomonas putida (strain W619).